Reading from the N-terminus, the 407-residue chain is Argininosuccinate synthase (407 aa).

ATP contacts are provided by residues 11-19 (AYSGGLDTS) and Ala-38. L-citrulline is bound by residues Tyr-89 and Ser-94. Gly-119 lines the ATP pocket. Residues Thr-121, Asn-125, and Asp-126 each coordinate L-aspartate. Residue Asn-125 participates in L-citrulline binding. Residues Arg-129, Ser-180, Ser-189, Glu-265, and Tyr-277 each coordinate L-citrulline.

Belongs to the argininosuccinate synthase family. Type 1 subfamily. Homotetramer.

The protein localises to the cytoplasm. The enzyme catalyses L-citrulline + L-aspartate + ATP = 2-(N(omega)-L-arginino)succinate + AMP + diphosphate + H(+). The protein operates within amino-acid biosynthesis; L-arginine biosynthesis; L-arginine from L-ornithine and carbamoyl phosphate: step 2/3. This is Argininosuccinate synthase from Magnetococcus marinus (strain ATCC BAA-1437 / JCM 17883 / MC-1).